The primary structure comprises 296 residues: Formamidopyrimidine-DNA glycosylase (296 aa).

P2 acts as the Schiff-base intermediate with DNA in catalysis. E3 acts as the Proton donor in catalysis. Residue K58 is the Proton donor; for beta-elimination activity of the active site. DNA is bound by residues H104, R126, and K169. The segment at 260 to 296 (SVYDRESQACRTPGCGGTVARIVQAGRSTFYCATCQK) adopts an FPG-type zinc-finger fold. The Proton donor; for delta-elimination activity role is filled by R286.

Belongs to the FPG family. In terms of assembly, monomer. Zn(2+) is required as a cofactor.

The enzyme catalyses Hydrolysis of DNA containing ring-opened 7-methylguanine residues, releasing 2,6-diamino-4-hydroxy-5-(N-methyl)formamidopyrimidine.. It catalyses the reaction 2'-deoxyribonucleotide-(2'-deoxyribose 5'-phosphate)-2'-deoxyribonucleotide-DNA = a 3'-end 2'-deoxyribonucleotide-(2,3-dehydro-2,3-deoxyribose 5'-phosphate)-DNA + a 5'-end 5'-phospho-2'-deoxyribonucleoside-DNA + H(+). In terms of biological role, involved in base excision repair of DNA damaged by oxidation or by mutagenic agents. Acts as a DNA glycosylase that recognizes and removes damaged bases. Has a preference for oxidized purines, such as 7,8-dihydro-8-oxoguanine (8-oxoG). Has AP (apurinic/apyrimidinic) lyase activity and introduces nicks in the DNA strand. Cleaves the DNA backbone by beta-delta elimination to generate a single-strand break at the site of the removed base with both 3'- and 5'-phosphates. In Rhizobium johnstonii (strain DSM 114642 / LMG 32736 / 3841) (Rhizobium leguminosarum bv. viciae), this protein is Formamidopyrimidine-DNA glycosylase.